The following is a 163-amino-acid chain: Ureidoglycolate lyase 2 (163 aa).

The protein belongs to the ureidoglycolate lyase family. In terms of assembly, homodimer. The cofactor is Ni(2+).

It carries out the reaction (S)-ureidoglycolate = urea + glyoxylate. The protein operates within nitrogen metabolism; (S)-allantoin degradation. Functionally, catalyzes the catabolism of the allantoin degradation intermediate (S)-ureidoglycolate, generating urea and glyoxylate. Involved in the utilization of allantoin as nitrogen source. The chain is Ureidoglycolate lyase 2 from Rhizobium meliloti (strain 1021) (Ensifer meliloti).